The sequence spans 678 residues: Growth arrest-specific protein 6 (678 aa).

A signal peptide spans 1–30; sequence MAPSLSPGPAALRRAPQLLLLLLAAECALA. The Gla domain occupies 53–94; sequence FEEAKQGHLERECVEELCSREEAREVFENDPETDYFYPRYLD. C65 and C70 form a disulfide bridge. Phosphoserine; by FAM20C is present on S71. Residues 116–154 form the EGF-like 1; calcium-binding domain; it reads LPDQCTPNPCDRKGTQACQDLMGNFFCLCKAGWGGRLCD. 14 cysteine pairs are disulfide-bonded: C120-C133, C125-C142, C144-C153, C160-C171, C167-C180, C182-C195, C201-C212, C207-C221, C223-C236, C242-C251, C247-C260, C262-C277, C283-C570, and C444-C470. The EGF-like 2; calcium-binding domain maps to 156-196; the sequence is DVNECSQENGGCLQICHNKPGSFHCSCHSGFELSSDGRTCQ. The 41-residue stretch at 197–237 folds into the EGF-like 3; calcium-binding domain; the sequence is DIDECADSEACGEARCKNLPGSYSCLCDEGFAYSSQEKACR. In terms of domain architecture, EGF-like 4; calcium-binding spans 238–278; that stretch reads DVDECLQGRCEQVCVNSPGSYTCHCDGRGGLKLSQDMDTCE. Laminin G-like domains follow at residues 298–470 and 477–670; these read GRMF…RMQC and GSFY…AHSC. 2 residues coordinate Ca(2+): D329 and E331. N-linked (GlcNAc...) asparagine glycosylation occurs at N420. A Ca(2+)-binding site is contributed by R440. T621 and T637 each carry phosphothreonine. Y640 carries the post-translational modification Phosphotyrosine. C643 and C670 are oxidised to a cystine. D656 provides a ligand contact to Ca(2+).

Heterodimer and heterotetramer with AXL. Proteolytically processed after secretion to yield a N-terminal 36 kDa protein and a C-terminal 50 kDa protein including the laminin G-like domains which activates AXL. In terms of processing, gamma-carboxyglutamate residues are formed by vitamin K dependent carboxylation. These residues are essential for the binding of calcium. In terms of tissue distribution, plasma. Isoform 1 and isoform 2 are widely expressed, isoform 1 being expressed at higher levels than isoform 2 in most tissues. Isoform 2 is the predominant form in spleen.

It is found in the secreted. Ligand for tyrosine-protein kinase receptors AXL, TYRO3 and MER whose signaling is implicated in cell growth and survival, cell adhesion and cell migration. GAS6/AXL signaling plays a role in various processes such as endothelial cell survival during acidification by preventing apoptosis, optimal cytokine signaling during human natural killer cell development, hepatic regeneration, gonadotropin-releasing hormone neuron survival and migration, platelet activation, or regulation of thrombotic responses. In terms of biological role, (Microbial infection) Can bridge virus envelope phosphatidylserine to the TAM receptor tyrosine kinase Axl to mediate viral entry by apoptotic mimicry. Plays a role in Dengue cell entry by apoptotic mimicry. Plays a role in Vaccinia virus cell entry by apoptotic mimicry. Plays a role in ebolavirus and marburgvirus cell entry by apoptotic mimicry. This Homo sapiens (Human) protein is Growth arrest-specific protein 6.